A 369-amino-acid chain; its full sequence is Anhydro-N-acetylmuramic acid kinase (369 aa).

12–19 (GTSMDGVD) contacts ATP.

This sequence belongs to the anhydro-N-acetylmuramic acid kinase family.

The catalysed reaction is 1,6-anhydro-N-acetyl-beta-muramate + ATP + H2O = N-acetyl-D-muramate 6-phosphate + ADP + H(+). Its pathway is amino-sugar metabolism; 1,6-anhydro-N-acetylmuramate degradation. It participates in cell wall biogenesis; peptidoglycan recycling. Its function is as follows. Catalyzes the specific phosphorylation of 1,6-anhydro-N-acetylmuramic acid (anhMurNAc) with the simultaneous cleavage of the 1,6-anhydro ring, generating MurNAc-6-P. Is required for the utilization of anhMurNAc either imported from the medium or derived from its own cell wall murein, and thus plays a role in cell wall recycling. The sequence is that of Anhydro-N-acetylmuramic acid kinase from Shewanella woodyi (strain ATCC 51908 / MS32).